Consider the following 502-residue polypeptide: Protein nucleotidyltransferase YdiU (502 aa).

Residues Gly-98, Gly-100, Arg-101, Lys-121, Asp-133, Gly-134, Arg-184, and Arg-191 each contribute to the ATP site. The Proton acceptor role is filled by Asp-260. 2 residues coordinate Mg(2+): Asn-261 and Asp-270. Asp-270 contacts ATP.

It belongs to the SELO family. Mg(2+) is required as a cofactor. Mn(2+) serves as cofactor.

It catalyses the reaction L-seryl-[protein] + ATP = 3-O-(5'-adenylyl)-L-seryl-[protein] + diphosphate. The enzyme catalyses L-threonyl-[protein] + ATP = 3-O-(5'-adenylyl)-L-threonyl-[protein] + diphosphate. The catalysed reaction is L-tyrosyl-[protein] + ATP = O-(5'-adenylyl)-L-tyrosyl-[protein] + diphosphate. It carries out the reaction L-histidyl-[protein] + UTP = N(tele)-(5'-uridylyl)-L-histidyl-[protein] + diphosphate. It catalyses the reaction L-seryl-[protein] + UTP = O-(5'-uridylyl)-L-seryl-[protein] + diphosphate. The enzyme catalyses L-tyrosyl-[protein] + UTP = O-(5'-uridylyl)-L-tyrosyl-[protein] + diphosphate. Nucleotidyltransferase involved in the post-translational modification of proteins. It can catalyze the addition of adenosine monophosphate (AMP) or uridine monophosphate (UMP) to a protein, resulting in modifications known as AMPylation and UMPylation. This is Protein nucleotidyltransferase YdiU from Rhizobium rhizogenes (strain K84 / ATCC BAA-868) (Agrobacterium radiobacter).